The following is a 494-amino-acid chain: Neuronal acetylcholine receptor subunit alpha-6 (494 aa).

Residues 1–31 form the signal peptide; that stretch reads MHPKRRLCWCLPASGAWAFMLTSLIADTTAC. Over 32 to 240 the chain is Extracellular; sequence ESEERLFHKL…TYSFYIRRLP (209 aa). Asparagine 54 and asparagine 171 each carry an N-linked (GlcNAc...) asparagine glycan. Cysteines 158 and 172 form a disulfide. 3 consecutive transmembrane segments (helical) span residues 241–265, 272–290, and 306–327; these read MFYT…FYLP, VTLC…LVIT, and YLLF…VLNI. At 328 to 468 the chain is on the cytoplasmic side; it reads HYRTPTTHTM…WKYVAMVIDR (141 aa). A disordered region spans residues 364–390; sequence KNISKKTKKGSAKTSGKSKHSKHKDNK. Basic residues predominate over residues 366–390; it reads ISKKTKKGSAKTSGKSKHSKHKDNK. The helical transmembrane segment at 469–489 threads the bilayer; sequence VFLWVFIILCVFGTAGLFIQP.

Belongs to the ligand-gated ion channel (TC 1.A.9) family. Acetylcholine receptor (TC 1.A.9.1) subfamily. Alpha-6/CHRNA6 sub-subfamily. Neuronal AChR is composed of two different types of subunits: alpha and non-alpha (beta). CHRNA6/alpha-6 subunit can be combined to CHRNB2/beta-2, CHRNA4/alpha-4 and CHRNB3/beta-3 to give rise to functional receptors. Heteropentamers containing CHRNB3 have an stoichiometry of (CHRNA6:CHRNB2)2:CHRNB3. Interacts with LYPD6.

The protein localises to the synaptic cell membrane. The enzyme catalyses K(+)(in) = K(+)(out). The catalysed reaction is Na(+)(in) = Na(+)(out). It carries out the reaction Ca(2+)(in) = Ca(2+)(out). Activated by a myriad of ligands such as acetylcholine, cytisine and nicotine. CHRNA6 nAChR activity is inhibited by the antagonists alpha-conotoxin MII and PIA, a small disulfide-constrained peptides from cone snails. Component of neuronal acetylcholine receptors (nAChRs) that function as pentameric, ligand-gated cation channels with high calcium permeability among other activities. nAChRs are excitatory neurotrasnmitter receptors formed by a collection of nAChR subunits known to mediate synaptic transmission in the nervous system and the neuromuscular junction. Each nAchR subunit confers differential attributes to channel properties, including activation, deactivation and desensitization kinetics, pH sensitivity, cation permeability, and binding to allosteric modulators. CHRNA6 forms pentameric channels with CHRNB2 and CHRNA4 that exhibit high sensitivity to ACh and nicotine and are predominantly expressed in only a few brain areas, including dopaminergic neurons, norepirephrine neurons and cells of the visual system. nAChrs containing CHRNA6 subunits mediate endogenous cholinergic modulation of dopamine and gamma-aminobutyric acid (GABA) release in response to nicotine at nerve terminals. Its function is as follows. Component of neuronal acetylcholine receptors (nAChRs) that function as pentameric, ligand-gated cation channels with high calcium permeability among other activities. nAChRs are excitatory neurotrasnmitter receptors formed by a collection of nAChR subunits known to mediate synaptic transmission in the nervous system and the neuromuscular junction. Each nAchR subunit confers differential attributes to channel properties, including activation, deactivation and desensitization kinetics, pH sensitivity, cation permeability, and binding to allosteric modulators. CHRNA6 forms pentameric channels with CHRNB2, CHRNB3 and CHRNA4 that exhibit high sensitivity to ACh and nicotine and are predominantly expressed in only a few brain areas, including dopaminergic neurons, norepirephrine neurons and cells of the visual system. nAChrs containing CHRNA6 subunits mediate endogenous cholinergic modulation of dopamine and gamma-aminobutyric acid (GABA) release in response to nicotine at nerve terminals. The polypeptide is Neuronal acetylcholine receptor subunit alpha-6 (CHRNA6) (Gallus gallus (Chicken)).